The sequence spans 478 residues: Glycogen synthase (478 aa).

Position 15 (Lys15) interacts with ADP-alpha-D-glucose.

It belongs to the glycosyltransferase 1 family. Bacterial/plant glycogen synthase subfamily.

The catalysed reaction is [(1-&gt;4)-alpha-D-glucosyl](n) + ADP-alpha-D-glucose = [(1-&gt;4)-alpha-D-glucosyl](n+1) + ADP + H(+). Its pathway is glycan biosynthesis; glycogen biosynthesis. Functionally, synthesizes alpha-1,4-glucan chains using ADP-glucose. The protein is Glycogen synthase of Clostridium botulinum (strain Alaska E43 / Type E3).